A 327-amino-acid polypeptide reads, in one-letter code: ATP-dependent 6-phosphofructokinase (327 aa).

ATP-binding positions include Gly-11, 72-73 (RS), and 102-105 (GDGS). Asp-103 lines the Mg(2+) pocket. 127–129 (TID) is a binding site for substrate. Asp-129 serves as the catalytic Proton acceptor. ADP is bound at residue Arg-156. Substrate-binding positions include Arg-164 and 171-173 (MGR). Residue 187-189 (GAE) coordinates ADP. Residues Glu-224, Arg-245, and 251 to 254 (HIQR) each bind substrate.

This sequence belongs to the phosphofructokinase type A (PFKA) family. ATP-dependent PFK group I subfamily. Prokaryotic clade 'B1' sub-subfamily. In terms of assembly, homotetramer. Requires Mg(2+) as cofactor.

It localises to the cytoplasm. The enzyme catalyses beta-D-fructose 6-phosphate + ATP = beta-D-fructose 1,6-bisphosphate + ADP + H(+). Its pathway is carbohydrate degradation; glycolysis; D-glyceraldehyde 3-phosphate and glycerone phosphate from D-glucose: step 3/4. Its activity is regulated as follows. Allosterically activated by ADP and other diphosphonucleosides, and allosterically inhibited by phosphoenolpyruvate. In terms of biological role, catalyzes the phosphorylation of D-fructose 6-phosphate to fructose 1,6-bisphosphate by ATP, the first committing step of glycolysis. The chain is ATP-dependent 6-phosphofructokinase from Sulfurovum sp. (strain NBC37-1).